Here is a 105-residue protein sequence, read N- to C-terminus: Malonate decarboxylase acyl carrier protein (105 aa).

Ser28 carries the post-translational modification O-(phosphoribosyl dephospho-coenzyme A)serine.

It belongs to the MdcC family. In terms of processing, covalently binds the prosthetic group of malonate decarboxylase.

The protein resides in the cytoplasm. Functionally, subunit of malonate decarboxylase, it is an acyl carrier protein to which acetyl and malonyl thioester residues are bound via a 2'-(5''-phosphoribosyl)-3'-dephospho-CoA prosthetic group and turn over during the catalytic mechanism. This is Malonate decarboxylase acyl carrier protein from Xanthomonas campestris pv. campestris (strain 8004).